The primary structure comprises 157 residues: Lectin (157 aa).

A disulfide bond links C37 and C54.

Homodimer. Detected in fruits (at protein level).

The protein localises to the secreted. Binds with high affinity specifically to chito-oligosaccharides. May play a role in plant defense against pathogens by directly binding with the chitin cell wall. Forms filamentous structures at higher concentrations and may promote wound healing by forming filaments with phloem proteins like PP1. The chain is Lectin from Coccinia grandis (Ivy gourd).